The chain runs to 825 residues: Probable ATP-dependent RNA helicase DDX20 (825 aa).

Positions 27-50 are disordered; that stretch reads PVQAVEPTPASPWTQRTAHDIGGP. The Q motif motif lies at 63-91; that stretch reads ADFESLLLSRPVLEGLRAAGFERPSPVQL. ATP-binding positions include arginine 85, glutamine 90, 107–114, and 110–115; these read AKSGTGKT and GTGKTC. A Helicase ATP-binding domain is found at 94 to 265; that stretch reads IPLGRCGLDL…TRYMRDPTFV (172 aa). Position 188 is a phosphoserine (serine 188). A DEAD box motif is present at residues 212 to 215; the sequence is DEAD. Phosphoserine is present on serine 270. The Helicase C-terminal domain maps to 300-449; it reads HLQELFSKVP…PIPPGLMEEC (150 aa). 2 stretches are compositionally biased toward polar residues: residues 465–475 and 484–504; these read SPTVATQSPKK and FQSQ…SASA. Disordered stretches follow at residues 465 to 573 and 642 to 753; these read SPTV…PGSL and QMLV…EPQE. Phosphoserine is present on residues serine 472, serine 501, and serine 506. Basic residues predominate over residues 508-518; it reads RPKHSKPKLPV. The span at 547 to 571 shows a compositional bias: polar residues; sequence KNSVQTSVEDSSSNSQHQAKDSSPG. At threonine 552 the chain carries Phosphothreonine. Residues serine 561, serine 653, serine 655, serine 657, serine 673, serine 678, and serine 679 each carry the phosphoserine modification. A compositionally biased stretch (low complexity) spans 646–668; the sequence is SSSQSGDSESDSDSCSSRTSSQS. Threonine 689 and threonine 706 each carry phosphothreonine. The span at 698-711 shows a compositional bias: polar residues; that stretch reads EQVQNGNDTPTQVE. Residues 733–744 are compositionally biased toward basic residues; it reads KQSRRNPARRSS.

It belongs to the DEAD box helicase family. DDX20 subfamily. Part of the core SMN complex that contains SMN1, GEMIN2/SIP1, DDX20/GEMIN3, GEMIN4, GEMIN5, GEMIN6, GEMIN7, GEMIN8 and STRAP/UNRIP. Part of the SMN-Sm complex that contains SMN1, GEMIN2/SIP1, DDX20/GEMIN3, GEMIN4, GEMIN5, GEMIN6, GEMIN7, GEMIN8, STRAP/UNRIP and the Sm proteins SNRPB, SNRPD1, SNRPD2, SNRPD3, SNRPE, SNRPF and SNRPG. Interacts with SMN1; the interaction is direct. Interacts with GEMIN4; the interaction is direct. Interacts with GEMIN5. Interacts with SNUPN; the interaction is direct. Interacts with PPP4R2. Interacts with FOXL2. Interacts with NANOS1 and PUM2.

It is found in the cytoplasm. It localises to the nucleus. The protein resides in the gem. It carries out the reaction ATP + H2O = ADP + phosphate + H(+). It catalyses the reaction a ribonucleoside 5'-triphosphate + H2O = a ribonucleoside 5'-diphosphate + phosphate + H(+). Functionally, the SMN complex catalyzes the assembly of small nuclear ribonucleoproteins (snRNPs), the building blocks of the spliceosome, and thereby plays an important role in the splicing of cellular pre-mRNAs. Most spliceosomal snRNPs contain a common set of Sm proteins SNRPB, SNRPD1, SNRPD2, SNRPD3, SNRPE, SNRPF and SNRPG that assemble in a heptameric protein ring on the Sm site of the small nuclear RNA to form the core snRNP (Sm core). In the cytosol, the Sm proteins SNRPD1, SNRPD2, SNRPE, SNRPF and SNRPG are trapped in an inactive 6S pICln-Sm complex by the chaperone CLNS1A that controls the assembly of the core snRNP. To assemble core snRNPs, the SMN complex accepts the trapped 5Sm proteins from CLNS1A forming an intermediate. Binding of snRNA inside 5Sm triggers eviction of the SMN complex, thereby allowing binding of SNRPD3 and SNRPB to complete assembly of the core snRNP. May also play a role in the metabolism of small nucleolar ribonucleoprotein (snoRNPs). The chain is Probable ATP-dependent RNA helicase DDX20 (Ddx20) from Mus musculus (Mouse).